The following is a 92-amino-acid chain: Large ribosomal subunit protein uL23c (92 aa).

Belongs to the universal ribosomal protein uL23 family. Part of the 50S ribosomal subunit.

It is found in the plastid. The protein resides in the chloroplast. In terms of biological role, binds to 23S rRNA. This is Large ribosomal subunit protein uL23c (rpl23) from Nephroselmis olivacea (Green alga).